The chain runs to 275 residues: HUWE1-associated protein modifying stress responses 1 (275 aa).

Over residues 32–44 (AEQDEQLPPELQE) the composition is skewed to acidic residues. The segment at 32–51 (AEQDEQLPPELQEEAAAAAQ) is disordered. The interval 80 to 152 (QQPGLSLWVP…LISFLCGKVP (73 aa)) is HUWE1-binding and HAPSTR1 oligomerization (HBO) domain. 3 disordered regions span residues 155 to 181 (RNSR…SSVE), 204 to 227 (SVRS…RRRN), and 250 to 275 (GTRK…NRMI). Serine 167 bears the Phosphoserine mark. The span at 172-181 (TSTETSSSVE) shows a compositional bias: low complexity. Residues 204 to 216 (SVRSSTPGSPTHV) show a composition bias toward polar residues. The residue at position 212 (serine 212) is a Phosphoserine.

This sequence belongs to the HAPSTR1 family. As to quaternary structure, homooligomer. Heterooligomer with HAPSTR2; the interaction is direct and stabilizes HAPSTR1. Interacts with HUWE1. Post-translationally, ubiquitinated by HUWE1. Promotes HAPSTR1 degradation through polyubiquitination.

The protein resides in the nucleus. It is found in the cytoplasm. Its function is as follows. Acts as a central player within a network of stress response pathways promoting cellular adaptability. The E3 ligase HUWE1 assists HAPSTR1 in controlling stress signaling and in turn, HUWE1 feeds back to promote the degradation of HAPSTR1. HAPSTR1 represents a central coordination mechanism for stress response programs. Functions as a negative regulator of TP53/P53 in the cellular response to telomere erosion and probably also DNA damage. May attenuate p53/TP53 activation through the E3 ubiquitin ligase HUWE1. The chain is HUWE1-associated protein modifying stress responses 1 from Homo sapiens (Human).